A 485-amino-acid chain; its full sequence is Glutamyl-tRNA(Gln) amidotransferase subunit A (485 aa).

Catalysis depends on charge relay system residues Lys-79 and Ser-154. The Acyl-ester intermediate role is filled by Ser-178.

The protein belongs to the amidase family. GatA subfamily. Heterotrimer of A, B and C subunits.

The enzyme catalyses L-glutamyl-tRNA(Gln) + L-glutamine + ATP + H2O = L-glutaminyl-tRNA(Gln) + L-glutamate + ADP + phosphate + H(+). Its function is as follows. Allows the formation of correctly charged Gln-tRNA(Gln) through the transamidation of misacylated Glu-tRNA(Gln) in organisms which lack glutaminyl-tRNA synthetase. The reaction takes place in the presence of glutamine and ATP through an activated gamma-phospho-Glu-tRNA(Gln). The protein is Glutamyl-tRNA(Gln) amidotransferase subunit A of Staphylococcus aureus (strain MRSA252).